Here is a 75-residue protein sequence, read N- to C-terminus: Large ribosomal subunit protein bL31 (75 aa).

This sequence belongs to the bacterial ribosomal protein bL31 family. Type A subfamily. As to quaternary structure, part of the 50S ribosomal subunit.

Its function is as follows. Binds the 23S rRNA. The polypeptide is Large ribosomal subunit protein bL31 (Pelodictyon phaeoclathratiforme (strain DSM 5477 / BU-1)).